The sequence spans 512 residues: Kelch repeat protein C2 (512 aa).

One can recognise a BTB domain in the interval 2–67; that stretch reads ESVIFSINGE…MRWKKINITI (66 aa). Positions 102–176 constitute a BACK domain; it reads CIRMFNFSKR…LLKWIHKNPN (75 aa). Kelch repeat units follow at residues 216 to 261, 262 to 307, 309 to 354, 356 to 403, 405 to 449, and 452 to 498; these read IKHN…LHNC, LYII…VNNG, LYVI…FVND, IYVM…EYDG, IYVI…SCGD, and LIIA…THKS.

The protein belongs to the poxviruses Kelch family.

This is Kelch repeat protein C2 from Rabbitpox virus (strain Utrecht) (RPV).